The chain runs to 307 residues: Putative S-adenosyl-L-methionine-dependent methyltransferase Mflv_5025 (307 aa).

S-adenosyl-L-methionine-binding positions include Asp130 and 159 to 160 (DL).

This sequence belongs to the UPF0677 family.

Functionally, exhibits S-adenosyl-L-methionine-dependent methyltransferase activity. This chain is Putative S-adenosyl-L-methionine-dependent methyltransferase Mflv_5025, found in Mycolicibacterium gilvum (strain PYR-GCK) (Mycobacterium gilvum (strain PYR-GCK)).